A 277-amino-acid chain; its full sequence is Nickel transport system permease protein NikC (277 aa).

Over 1–12 (MNFFLSSRWSVR) the chain is Cytoplasmic. A helical transmembrane segment spans residues 13-33 (LALIIIALLALIALTSQWWLP). Topologically, residues 34–78 (YDPQAIDLPSRLLSPDAQHWLGTDHLGRDIFSRLMAATRVSLGSV) are periplasmic. The ABC transmembrane type-1 domain maps to 67–260 (LMAATRVSLG…ISVMAFNLVG (194 aa)). The helical transmembrane segment at 79 to 99 (MACLLLVLTLGLVIGGSAGLI) threads the bilayer. Residues 100–120 (GGRVDQATMRVADMFMTFPTS) lie on the Cytoplasmic side of the membrane. Residues 121–141 (ILSFFMVGVLGTGLTNVIIAI) form a helical membrane-spanning segment. At 142-183 (ALSHWAWYARMVRSLVISLRQREFVLASRLSGAGHVRVFVDH) the chain is on the periplasmic side. A helical membrane pass occupies residues 184–204 (LAGAVIPSLLVLATLDIGHMM). The Cytoplasmic portion of the chain corresponds to 205–207 (LHV). Residues 208–228 (AGMSFLGLGVTAPTAEWGVMI) form a helical membrane-spanning segment. Residues 229–239 (NDARQYIWTQP) lie on the Periplasmic side of the membrane. A helical membrane pass occupies residues 240 to 260 (LQMFWPGLALFISVMAFNLVG). The Cytoplasmic segment spans residues 261 to 277 (DALRDHLDPHLVTEHAH).

It belongs to the binding-protein-dependent transport system permease family. OppBC subfamily. In terms of assembly, probably forms a heterodimeric pore with NikB.

The protein localises to the cell inner membrane. Involved in a nickel transport system, probably translocates nickel through the bacterial inner membrane. The chain is Nickel transport system permease protein NikC (nikC) from Escherichia coli O157:H7.